The primary structure comprises 351 residues: Protein RecA (351 aa).

Residue Gly-73–Thr-80 coordinates ATP.

The protein belongs to the RecA family.

Its subcellular location is the cytoplasm. Can catalyze the hydrolysis of ATP in the presence of single-stranded DNA, the ATP-dependent uptake of single-stranded DNA by duplex DNA, and the ATP-dependent hybridization of homologous single-stranded DNAs. It interacts with LexA causing its activation and leading to its autocatalytic cleavage. In Oleidesulfovibrio alaskensis (strain ATCC BAA-1058 / DSM 17464 / G20) (Desulfovibrio alaskensis), this protein is Protein RecA.